The chain runs to 149 residues: Large ribosomal subunit protein uL11 (149 aa).

The protein belongs to the universal ribosomal protein uL11 family. In terms of assembly, part of the ribosomal stalk of the 50S ribosomal subunit. Interacts with L10 and the large rRNA to form the base of the stalk. L10 forms an elongated spine to which L12 dimers bind in a sequential fashion forming a multimeric L10(L12)X complex. In terms of processing, one or more lysine residues are methylated.

Functionally, forms part of the ribosomal stalk which helps the ribosome interact with GTP-bound translation factors. This Methylobacterium sp. (strain 4-46) protein is Large ribosomal subunit protein uL11.